Consider the following 156-residue polypeptide: Transcription elongation factor GreA (156 aa).

The stretch at 8-75 (LTKEGYEKLK…ELENMLSKAE (68 aa)) forms a coiled coil.

This sequence belongs to the GreA/GreB family.

Its function is as follows. Necessary for efficient RNA polymerase transcription elongation past template-encoded arresting sites. The arresting sites in DNA have the property of trapping a certain fraction of elongating RNA polymerases that pass through, resulting in locked ternary complexes. Cleavage of the nascent transcript by cleavage factors such as GreA or GreB allows the resumption of elongation from the new 3'terminus. GreA releases sequences of 2 to 3 nucleotides. In Thermosipho melanesiensis (strain DSM 12029 / CIP 104789 / BI429), this protein is Transcription elongation factor GreA.